Here is a 155-residue protein sequence, read N- to C-terminus: Ribosome maturation factor RimP (155 aa).

The protein belongs to the RimP family.

It is found in the cytoplasm. Required for maturation of 30S ribosomal subunits. The polypeptide is Ribosome maturation factor RimP (Prochlorococcus marinus subsp. pastoris (strain CCMP1986 / NIES-2087 / MED4)).